The sequence spans 489 residues: Glutamate--tRNA ligase (489 aa).

Positions 11–21 (PSPTGHLHIGG) match the 'HIGH' region motif. The 'KMSKS' region motif lies at 253–257 (KLSKR). Lysine 256 contributes to the ATP binding site.

The protein belongs to the class-I aminoacyl-tRNA synthetase family. Glutamate--tRNA ligase type 1 subfamily. In terms of assembly, monomer.

It localises to the cytoplasm. It catalyses the reaction tRNA(Glu) + L-glutamate + ATP = L-glutamyl-tRNA(Glu) + AMP + diphosphate. In terms of biological role, catalyzes the attachment of glutamate to tRNA(Glu) in a two-step reaction: glutamate is first activated by ATP to form Glu-AMP and then transferred to the acceptor end of tRNA(Glu). The protein is Glutamate--tRNA ligase of Geobacillus stearothermophilus (Bacillus stearothermophilus).